The sequence spans 326 residues: L-lactate dehydrogenase (326 aa).

NAD(+) contacts are provided by residues Val-26, Asp-47, Lys-52, Tyr-78, and 92-93 (GA). Substrate is bound by residues Gln-95 and Arg-101. NAD(+) contacts are provided by residues Thr-114, 131 to 133 (ASN), and Ser-156. 133–136 (NPVD) serves as a coordination point for substrate. 161 to 164 (DTAR) serves as a coordination point for substrate. Beta-D-fructose 1,6-bisphosphate contacts are provided by Arg-166 and His-181. Catalysis depends on His-188, which acts as the Proton acceptor. Residue Tyr-233 is modified to Phosphotyrosine. Thr-242 is a substrate binding site.

This sequence belongs to the LDH/MDH superfamily. LDH family. As to quaternary structure, homotetramer.

The protein localises to the cytoplasm. The catalysed reaction is (S)-lactate + NAD(+) = pyruvate + NADH + H(+). The protein operates within fermentation; pyruvate fermentation to lactate; (S)-lactate from pyruvate: step 1/1. With respect to regulation, allosterically activated by fructose 1,6-bisphosphate (FBP). Functionally, catalyzes the conversion of lactate to pyruvate. This Corynebacterium jeikeium (strain K411) protein is L-lactate dehydrogenase.